A 168-amino-acid chain; its full sequence is Cell division inhibitor SulA (168 aa).

The interval 106-112 (ALLTGNY) is ftsZ binding. Residues 161–168 (KIHSYLYH) are lon protease binding.

This sequence belongs to the SulA family. Interacts with FtsZ. Is rapidly cleaved and degraded by the Lon protease once DNA damage is repaired.

Functionally, component of the SOS system and an inhibitor of cell division. Accumulation of SulA causes rapid cessation of cell division and the appearance of long, non-septate filaments. In the presence of GTP, binds a polymerization-competent form of FtsZ in a 1:1 ratio, thus inhibiting FtsZ polymerization and therefore preventing it from participating in the assembly of the Z ring. This mechanism prevents the premature segregation of damaged DNA to daughter cells during cell division. This chain is Cell division inhibitor SulA, found in Yersinia pestis bv. Antiqua (strain Antiqua).